A 421-amino-acid chain; its full sequence is Histidine--tRNA ligase (421 aa).

The protein belongs to the class-II aminoacyl-tRNA synthetase family. As to quaternary structure, homodimer.

The protein localises to the cytoplasm. It catalyses the reaction tRNA(His) + L-histidine + ATP = L-histidyl-tRNA(His) + AMP + diphosphate + H(+). The polypeptide is Histidine--tRNA ligase (Natranaerobius thermophilus (strain ATCC BAA-1301 / DSM 18059 / JW/NM-WN-LF)).